Consider the following 379-residue polypeptide: Glucose-1-phosphate adenylyltransferase (379 aa).

Alpha-D-glucose 1-phosphate-binding positions include G164, 179–180, and S190; that span reads EK.

The protein belongs to the bacterial/plant glucose-1-phosphate adenylyltransferase family. As to quaternary structure, homotetramer.

The enzyme catalyses alpha-D-glucose 1-phosphate + ATP + H(+) = ADP-alpha-D-glucose + diphosphate. It functions in the pathway glycan biosynthesis; glycogen biosynthesis. Functionally, involved in the biosynthesis of ADP-glucose, a building block required for the elongation reactions to produce glycogen. Catalyzes the reaction between ATP and alpha-D-glucose 1-phosphate (G1P) to produce pyrophosphate and ADP-Glc. The polypeptide is Glucose-1-phosphate adenylyltransferase (Streptococcus agalactiae serotype Ia (strain ATCC 27591 / A909 / CDC SS700)).